An 85-amino-acid chain; its full sequence is Large ribosomal subunit protein bL27 (85 aa).

Residues 1–22 form a disordered region; it reads MAHKKAGGSTRNGRDSESKRLG.

The protein belongs to the bacterial ribosomal protein bL27 family.

This chain is Large ribosomal subunit protein bL27, found in Vibrio parahaemolyticus serotype O3:K6 (strain RIMD 2210633).